The chain runs to 588 residues: Hyaluronan synthase 1 (588 aa).

The Cytoplasmic portion of the chain corresponds to 1–28 (MKEKAAETMEIPEGIPKDLEPKHPTLWR). The chain crosses the membrane as a helical span at residues 29–49 (IIYYSFGVVLLATITAAYVAE). Residues 50-61 (FQVLKHEAILFS) are Extracellular-facing. Residues 62–82 (LGLYGLAMLLHLMMQSLFAFL) form a helical membrane-spanning segment. Residues 83–411 (EIRRVNKSEL…IWMTYESVVS (329 aa)) lie on the Cytoplasmic side of the membrane. The chain crosses the membrane as a helical span at residues 412–432 (FIFPFFITATVIRLIYAGTIW). Residue asparagine 433 is a topological domain, extracellular. A helical membrane pass occupies residues 434-454 (VVWLLLCIQIMSLFKSIYACW). The Cytoplasmic segment spans residues 455–456 (LR). The chain crosses the membrane as a helical span at residues 457–477 (GNFIMLLMSLYSMLYMTGLLP). Residues 478–505 (SKYFALLTLNKTGWGTSGRKKIVGNYMP) are Extracellular-facing. A helical transmembrane segment spans residues 506 to 526 (ILPLSIWAAVLCGGVGYSIYM). The Cytoplasmic portion of the chain corresponds to 527-543 (DCQNDWSTPEKQKEMYH). The chain crosses the membrane as a helical span at residues 544–564 (LLYGCVGYVMYWVIMAVMYWV). At 565–588 (WVKRCCRKRSQTVTLVHDIPDMCV) the chain is on the extracellular side.

The protein belongs to the NodC/HAS family. It depends on Mg(2+) as a cofactor. In terms of tissue distribution, expression moves as a gradient through the embryo. The mRNA is first expressed in the animal region of the blastula, and by early gastrula is found everywhere except in the outer layer of the dorsal blastopore lip. By mid-gastrula, protein is present in the inner ectodermal layer and the endoderm, then disappears from dorsal ectoderm as the neural plate is induced and later decays in a dorsoventral direction. Last expressed in ventral regions of the gut at the tailbud stage (at protein level).

The protein resides in the membrane. The enzyme catalyses [hyaluronan](n) + UDP-N-acetyl-alpha-D-glucosamine = N-acetyl-beta-D-glucosaminyl-(1-&gt;4)-[hyaluronan](n) + UDP + H(+). It catalyses the reaction N-acetyl-beta-D-glucosaminyl-(1-&gt;4)-[hyaluronan](n) + UDP-alpha-D-glucuronate = [hyaluronan](n+1) + UDP + H(+). Its pathway is glycan biosynthesis; hyaluronan biosynthesis. Its function is as follows. Catalyzes the addition of GlcNAc or GlcUA monosaccharides to the nascent hyaluronan polymer. Therefore, it is essential to hyaluronan synthesis a major component of most extracellular matrices that has a structural role in tissues architectures and regulates cell adhesion, migration and differentiation. Also able to catalyze the synthesis of chito-oligosaccharide depending on the substrate. This chain is Hyaluronan synthase 1 (has1), found in Xenopus laevis (African clawed frog).